The sequence spans 340 residues: MTDNRPVIGITMGDPVGIGPEIIVSALDDPFVYTVCRPLVLGDEGVMERAIDLKSARMDVHTTDTPAGGKYCHGTMDIVPLSRLDAATLLAGHPTPGTGKAMIDYITTGVDLAMDGKIQAIATCPITKTAMKLAGSKFHGHTELIADRTHTPRVAMMMAGDRLRVVLVTIHIPLCEVSARLNQAEILATISLTSETLKTKFGIPEPRIAVAGLNPHGGEDGMFGSEELEIIAPAVEQARSKGITVSGPFPPDTLFFNAANHKFDAVVCMYHDQGLIPFKMIHFSDGVNTTLGLPIIRTSVDHGTAYDIAWRGTADPSSLIAAIKMAALQATITGANRINR.

Residues His141 and Thr142 each coordinate substrate. 3 residues coordinate a divalent metal cation: His171, His216, and His271. Substrate contacts are provided by Lys279, Asn288, and Arg297.

It belongs to the PdxA family. Homodimer. Requires Zn(2+) as cofactor. Mg(2+) is required as a cofactor. It depends on Co(2+) as a cofactor.

Its subcellular location is the cytoplasm. The catalysed reaction is 4-(phosphooxy)-L-threonine + NAD(+) = 3-amino-2-oxopropyl phosphate + CO2 + NADH. The protein operates within cofactor biosynthesis; pyridoxine 5'-phosphate biosynthesis; pyridoxine 5'-phosphate from D-erythrose 4-phosphate: step 4/5. Its function is as follows. Catalyzes the NAD(P)-dependent oxidation of 4-(phosphooxy)-L-threonine (HTP) into 2-amino-3-oxo-4-(phosphooxy)butyric acid which spontaneously decarboxylates to form 3-amino-2-oxopropyl phosphate (AHAP). This chain is 4-hydroxythreonine-4-phosphate dehydrogenase, found in Desulforapulum autotrophicum (strain ATCC 43914 / DSM 3382 / VKM B-1955 / HRM2) (Desulfobacterium autotrophicum).